We begin with the raw amino-acid sequence, 442 residues long: tRNA modification GTPase MnmE (442 aa).

The (6S)-5-formyl-5,6,7,8-tetrahydrofolate site is built by arginine 23, glutamate 82, and lysine 121. The region spanning 215-364 (GTSLILAGKP…VKQALIQWMQ (150 aa)) is the TrmE-type G domain. Asparagine 225 contributes to the K(+) binding site. GTP-binding positions include 225-230 (NVGKSS), 244-250 (THIPGTT), 269-272 (DTAG), and 325-328 (NKAD). Serine 229 provides a ligand contact to Mg(2+). Positions 244, 246, and 249 each coordinate K(+). Threonine 250 is a Mg(2+) binding site. Residue lysine 442 participates in (6S)-5-formyl-5,6,7,8-tetrahydrofolate binding.

The protein belongs to the TRAFAC class TrmE-Era-EngA-EngB-Septin-like GTPase superfamily. TrmE GTPase family. In terms of assembly, homodimer. Heterotetramer of two MnmE and two MnmG subunits. K(+) serves as cofactor.

It is found in the cytoplasm. Exhibits a very high intrinsic GTPase hydrolysis rate. Involved in the addition of a carboxymethylaminomethyl (cmnm) group at the wobble position (U34) of certain tRNAs, forming tRNA-cmnm(5)s(2)U34. The chain is tRNA modification GTPase MnmE from Chlamydia pneumoniae (Chlamydophila pneumoniae).